Consider the following 335-residue polypeptide: MPIRHCIVHLIDKKPDGSPAVLHARDSELAASDAIENLLADLNDSYNAKQGKAWGFFHGESGAYPLSGWLKQYLDEEKDFTAFSRVAVEHLQKLMEESNLSTGGHILFAHYQQGMTEYLAIALLHHSEGVAVNAQLDVTPSRHLDLGQLHLAARINLSEWKNNQNSRQYISFIKGKNGKKVSDYFRDFIGCQEGVDGPGETRTLLKAFSDFVESEDLPEESAREKTQTLVEYATTQTKLGEPVTLEELSSLIDEDRPKAFYDHIRNKDYGLSPEIPADKRTLNQFRRFTGRAEGLSISFEAHLLGDKVEYDEAAGTLIIKGLPTTLVDQLKRRKD.

Belongs to the YejK family.

It is found in the cytoplasm. It localises to the nucleoid. The sequence is that of Nucleoid-associated protein PP_0973 from Pseudomonas putida (strain ATCC 47054 / DSM 6125 / CFBP 8728 / NCIMB 11950 / KT2440).